The sequence spans 75 residues: UPF0270 protein PSPTO_1630 (75 aa).

This sequence belongs to the UPF0270 family.

The protein is UPF0270 protein PSPTO_1630 of Pseudomonas syringae pv. tomato (strain ATCC BAA-871 / DC3000).